The following is a 52-amino-acid chain: UPF0391 membrane protein XOO4217 (52 aa).

2 helical membrane-spanning segments follow: residues 5–25 (AMIF…GIAG) and 27–47 (ATNI…ISMF).

The protein belongs to the UPF0391 family.

The protein resides in the cell membrane. The polypeptide is UPF0391 membrane protein XOO4217 (Xanthomonas oryzae pv. oryzae (strain KACC10331 / KXO85)).